The chain runs to 156 residues: ATP synthase subunit b (156 aa).

Residues 7 to 27 (LIVQMLVFVVFIGLTMKFIWP) form a helical membrane-spanning segment.

It belongs to the ATPase B chain family. As to quaternary structure, F-type ATPases have 2 components, F(1) - the catalytic core - and F(0) - the membrane proton channel. F(1) has five subunits: alpha(3), beta(3), gamma(1), delta(1), epsilon(1). F(0) has three main subunits: a(1), b(2) and c(10-14). The alpha and beta chains form an alternating ring which encloses part of the gamma chain. F(1) is attached to F(0) by a central stalk formed by the gamma and epsilon chains, while a peripheral stalk is formed by the delta and b chains.

It is found in the cell inner membrane. F(1)F(0) ATP synthase produces ATP from ADP in the presence of a proton or sodium gradient. F-type ATPases consist of two structural domains, F(1) containing the extramembraneous catalytic core and F(0) containing the membrane proton channel, linked together by a central stalk and a peripheral stalk. During catalysis, ATP synthesis in the catalytic domain of F(1) is coupled via a rotary mechanism of the central stalk subunits to proton translocation. Functionally, component of the F(0) channel, it forms part of the peripheral stalk, linking F(1) to F(0). This chain is ATP synthase subunit b, found in Coxiella burnetii (strain CbuK_Q154) (Coxiella burnetii (strain Q154)).